Here is a 393-residue protein sequence, read N- to C-terminus: Probable acetyl-CoA acyltransferase (393 aa).

The active-site Acyl-thioester intermediate is C88. Catalysis depends on proton acceptor residues H349 and C378.

This sequence belongs to the thiolase-like superfamily. Thiolase family.

It localises to the cytoplasm. It carries out the reaction 2 acetyl-CoA = acetoacetyl-CoA + CoA. The polypeptide is Probable acetyl-CoA acyltransferase (Staphylococcus aureus (strain MRSA252)).